The sequence spans 197 residues: Protein shisa-4 (197 aa).

Positions 1–27 (MPPAGLRRAAPLTAIALLVLGAPLVLA) are cleaved as a signal peptide. Residues 28-87 (GEDCLWYLDRNGSWHPGFNCEFFTFCCGTCYHRYCCRDLTLLITERQQKHCLAFSPKTIA) lie on the Extracellular side of the membrane. Residues 88 to 108 (GIASAVILFVAVVATTICCFL) form a helical membrane-spanning segment. The Cytoplasmic portion of the chain corresponds to 109-197 (CSCCYLYRRR…MPPQPSYPGA (89 aa)).

It belongs to the shisa family.

It is found in the membrane. In Homo sapiens (Human), this protein is Protein shisa-4 (SHISA4).